Here is a 352-residue protein sequence, read N- to C-terminus: Uroporphyrinogen decarboxylase (352 aa).

Substrate-binding positions include 27–31 (RQAGR), aspartate 77, tyrosine 154, threonine 209, and histidine 325.

Belongs to the uroporphyrinogen decarboxylase family. As to quaternary structure, homodimer.

The protein localises to the cytoplasm. It catalyses the reaction uroporphyrinogen III + 4 H(+) = coproporphyrinogen III + 4 CO2. Its pathway is porphyrin-containing compound metabolism; protoporphyrin-IX biosynthesis; coproporphyrinogen-III from 5-aminolevulinate: step 4/4. In terms of biological role, catalyzes the decarboxylation of four acetate groups of uroporphyrinogen-III to yield coproporphyrinogen-III. In Legionella pneumophila (strain Lens), this protein is Uroporphyrinogen decarboxylase.